The following is a 301-amino-acid chain: CRISPR-associated endonuclease Cas1 (301 aa).

Mn(2+) contacts are provided by Glu-133, His-200, and Asp-213.

It belongs to the CRISPR-associated endonuclease Cas1 family. Homodimer, forms a heterotetramer with a Cas2 homodimer. Requires Mg(2+) as cofactor. Mn(2+) serves as cofactor.

Its function is as follows. CRISPR (clustered regularly interspaced short palindromic repeat), is an adaptive immune system that provides protection against mobile genetic elements (viruses, transposable elements and conjugative plasmids). CRISPR clusters contain spacers, sequences complementary to antecedent mobile elements, and target invading nucleic acids. CRISPR clusters are transcribed and processed into CRISPR RNA (crRNA). Acts as a dsDNA endonuclease. Involved in the integration of spacer DNA into the CRISPR cassette. The protein is CRISPR-associated endonuclease Cas1 of Clostridium sp. (strain SY8519).